A 148-amino-acid chain; its full sequence is MSFTYNRTVRFQDTDAAGVVYFANVLGICHEAYEESLEASSINLKDFFTNPSVAFPIVHASVDFLRPMFVGDKLLISLIPQKIGVEKFEITYEVTVAEVVVAKAITRHVCIDASSRSKQELPDEIVQWLETNRRDAEGAERRRSREIM.

Asp15 is a catalytic residue.

It belongs to the 4-hydroxybenzoyl-CoA thioesterase family. DHNA-CoA hydrolase subfamily.

The catalysed reaction is 1,4-dihydroxy-2-naphthoyl-CoA + H2O = 1,4-dihydroxy-2-naphthoate + CoA + H(+). The protein operates within cofactor biosynthesis; phylloquinone biosynthesis. It participates in quinol/quinone metabolism; 1,4-dihydroxy-2-naphthoate biosynthesis; 1,4-dihydroxy-2-naphthoate from chorismate: step 7/7. In terms of biological role, catalyzes the hydrolysis of 1,4-dihydroxy-2-naphthoyl-CoA (DHNA-CoA) to 1,4-dihydroxy-2-naphthoate (DHNA), a reaction involved in phylloquinone (vitamin K1) biosynthesis. The sequence is that of 1,4-dihydroxy-2-naphthoyl-CoA hydrolase from Nostoc punctiforme (strain ATCC 29133 / PCC 73102).